Consider the following 77-residue polypeptide: Translation initiation factor IF-1, chloroplastic (77 aa).

Residues 1–72 (MRKQNLIEME…TKGRITYRLR (72 aa)) form the S1-like domain.

The protein belongs to the IF-1 family. In terms of assembly, component of the 30S ribosomal translation pre-initiation complex which assembles on the 30S ribosome in the order IF-2 and IF-3, IF-1 and N-formylmethionyl-tRNA(fMet); mRNA recruitment can occur at any time during PIC assembly.

It localises to the plastid. It is found in the chloroplast. Its function is as follows. One of the essential components for the initiation of protein synthesis. Stabilizes the binding of IF-2 and IF-3 on the 30S subunit to which N-formylmethionyl-tRNA(fMet) subsequently binds. Helps modulate mRNA selection, yielding the 30S pre-initiation complex (PIC). Upon addition of the 50S ribosomal subunit IF-1, IF-2 and IF-3 are released leaving the mature 70S translation initiation complex. The chain is Translation initiation factor IF-1, chloroplastic from Staurastrum punctulatum (Green alga).